Here is a 122-residue protein sequence, read N- to C-terminus: Large ribosomal subunit protein uL14 (122 aa).

It belongs to the universal ribosomal protein uL14 family. As to quaternary structure, part of the 50S ribosomal subunit. Forms a cluster with proteins L3 and L19. In the 70S ribosome, L14 and L19 interact and together make contacts with the 16S rRNA in bridges B5 and B8.

Its function is as follows. Binds to 23S rRNA. Forms part of two intersubunit bridges in the 70S ribosome. The sequence is that of Large ribosomal subunit protein uL14 from Renibacterium salmoninarum (strain ATCC 33209 / DSM 20767 / JCM 11484 / NBRC 15589 / NCIMB 2235).